We begin with the raw amino-acid sequence, 433 residues long: Tol-Pal system protein TolB (433 aa).

The first 26 residues, 1–26 (MNKLRLFRSFFAFLLPFGMATGAAHG), serve as a signal peptide directing secretion.

The protein belongs to the TolB family. As to quaternary structure, the Tol-Pal system is composed of five core proteins: the inner membrane proteins TolA, TolQ and TolR, the periplasmic protein TolB and the outer membrane protein Pal. They form a network linking the inner and outer membranes and the peptidoglycan layer.

It localises to the periplasm. Its function is as follows. Part of the Tol-Pal system, which plays a role in outer membrane invagination during cell division and is important for maintaining outer membrane integrity. The polypeptide is Tol-Pal system protein TolB (Methylobacillus flagellatus (strain ATCC 51484 / DSM 6875 / VKM B-1610 / KT)).